We begin with the raw amino-acid sequence, 540 residues long: Chaperonin GroEL (540 aa).

ATP-binding positions include 30–33, lysine 51, 87–91, glycine 415, 479–481, and aspartate 495; these read TLGP, DGTTT, and NAA.

It belongs to the chaperonin (HSP60) family. In terms of assembly, forms a cylinder of 14 subunits composed of two heptameric rings stacked back-to-back. Interacts with the co-chaperonin GroES.

It localises to the cytoplasm. It catalyses the reaction ATP + H2O + a folded polypeptide = ADP + phosphate + an unfolded polypeptide.. In terms of biological role, together with its co-chaperonin GroES, plays an essential role in assisting protein folding. The GroEL-GroES system forms a nano-cage that allows encapsulation of the non-native substrate proteins and provides a physical environment optimized to promote and accelerate protein folding. This is Chaperonin GroEL from Raoultella ornithinolytica (Klebsiella ornithinolytica).